A 406-amino-acid chain; its full sequence is MQVYLVGGAVRDQLLGIDSYDNDWVVVGATPEMMLAQGYTAVGKDFPVFLHPKNKEEHALARTERKSGSGYTGFDCFFDPSVTLEEDLIRRDLTINAMAMDDSGQLYDPYGGQADLNNRILRHVSDAFVEDPLRVLRVARFSAKLASLGFTVAKETMQLMRDIADSGELNTLTPERVWQEWHKSLSTPRPDVFLSVLRDCGALAVVLPEIEALFGVPQPEKWHPEIDTGIHTLMVAEQAAKLSTSLPVRFAAQVHDLGKGVTPESEWPSHKMHCHTGLKLIKKLCERVRVPNEFKELALMVCEQHSNIHRAAELKPQTIIKILNKFDVWRKSERLKDILICCQADHAGRKGLEDLPYPQAGIFMLAYQAAASVDVQAIIQDGFKGPAIRDEQEKRRIEAVKVALNK.

The ATP site is built by Gly-8 and Arg-11. CTP-binding residues include Gly-8 and Arg-11. Asp-21 and Asp-23 together coordinate Mg(2+). ATP is bound by residues Arg-91, Arg-137, and Arg-140. Positions 91, 137, and 140 each coordinate CTP. Positions 228–329 (TGIHTLMVAE…IKILNKFDVW (102 aa)) constitute an HD domain.

It belongs to the tRNA nucleotidyltransferase/poly(A) polymerase family. Bacterial CCA-adding enzyme type 1 subfamily. Monomer. Can also form homodimers and oligomers. The cofactor is Mg(2+). Ni(2+) serves as cofactor.

It catalyses the reaction a tRNA precursor + 2 CTP + ATP = a tRNA with a 3' CCA end + 3 diphosphate. It carries out the reaction a tRNA with a 3' CCA end + 2 CTP + ATP = a tRNA with a 3' CCACCA end + 3 diphosphate. Functionally, catalyzes the addition and repair of the essential 3'-terminal CCA sequence in tRNAs without using a nucleic acid template. Adds these three nucleotides in the order of C, C, and A to the tRNA nucleotide-73, using CTP and ATP as substrates and producing inorganic pyrophosphate. tRNA 3'-terminal CCA addition is required both for tRNA processing and repair. Also involved in tRNA surveillance by mediating tandem CCA addition to generate a CCACCA at the 3' terminus of unstable tRNAs. While stable tRNAs receive only 3'-terminal CCA, unstable tRNAs are marked with CCACCA and rapidly degraded. The chain is Multifunctional CCA protein from Vibrio parahaemolyticus serotype O3:K6 (strain RIMD 2210633).